Here is a 375-residue protein sequence, read N- to C-terminus: 23S rRNA (uracil(747)-C(5))-methyltransferase RlmC (375 aa).

[4Fe-4S] cluster is bound by residues Cys3, Cys11, Cys14, and Cys87. The S-adenosyl-L-methionine site is built by Gln212, Phe241, Glu262, and Asn307. The active-site Nucleophile is Cys334.

It belongs to the class I-like SAM-binding methyltransferase superfamily. RNA M5U methyltransferase family. RlmC subfamily.

It carries out the reaction uridine(747) in 23S rRNA + S-adenosyl-L-methionine = 5-methyluridine(747) in 23S rRNA + S-adenosyl-L-homocysteine + H(+). Its function is as follows. Catalyzes the formation of 5-methyl-uridine at position 747 (m5U747) in 23S rRNA. In Escherichia coli O9:H4 (strain HS), this protein is 23S rRNA (uracil(747)-C(5))-methyltransferase RlmC.